Consider the following 337-residue polypeptide: Viral cathepsin (337 aa).

An N-terminal signal peptide occupies residues 1 to 19; sequence MTLLMIFTILLVASSQIEG. A propeptide spans 20-126 (activation peptide); it reads HLKFDIHDAQ…DAPPDVHDEL (107 aa). 3 disulfide bridges follow: cysteine 147-cysteine 188, cysteine 181-cysteine 221, and cysteine 276-cysteine 324. The active site involves cysteine 150. Asparagine 172 carries an N-linked (GlcNAc...) asparagine; by host glycan. Catalysis depends on residues histidine 283 and asparagine 303.

Belongs to the peptidase C1 family. Post-translationally, synthesized as an inactive proenzyme and activated by proteolytic removal of the inhibitory propeptide.

It carries out the reaction Endopeptidase of broad specificity, hydrolyzing substrates of both cathepsin L and cathepsin B.. Functionally, cysteine protease that plays an essential role in host liquefaction to facilitate horizontal transmission of the virus. May participate in the degradation of foreign protein expressed by the baculovirus system. The polypeptide is Viral cathepsin (VCATH) (Adoxophyes honmai (Smaller tea tortrix moth)).